A 223-amino-acid chain; its full sequence is Mitochondrial cardiolipin hydrolase (223 aa).

Residues 1–6 (MGCASS) lie on the Mitochondrial intermembrane side of the membrane. The helical transmembrane segment at 7-24 (KEEVALTPLSDVNAAKEV) threads the bilayer. Topologically, residues 25 to 223 (ADLKAQVDQL…QFDKLWDMFK (199 aa)) are cytoplasmic. The 28-residue stretch at 164–191 (TAAHMHHKFAIIDGRLLLNGSFNWTRQA) folds into the PLD phosphodiesterase domain. Active-site residues include H169, K171, and D176.

The protein belongs to the phospholipase D family. MitoPLD/Zucchini subfamily. In terms of assembly, homodimer.

The protein localises to the mitochondrion outer membrane. Functionally, plays a critical role in PIWI-interacting RNA (piRNA) biogenesis. piRNAs provide essential protection against the activity of mobile genetic elements. piRNA-mediated transposon silencing is thus critical for maintaining genome stability. Backbone-non-specific, single strand-specific nuclease, cleaving either RNA or DNA substrates with similar affinity. Produces 5' phosphate and 3' hydroxyl termini, suggesting it could directly participate in the processing of primary piRNA transcripts. Has been proposed to act as a cardiolipin hydrolase to generate phosphatidic acid at mitochondrial surface. Although it cannot be excluded that it can act as a phospholipase in some circumstances, this activity could not be confirmed. This is Mitochondrial cardiolipin hydrolase from Chlamydomonas reinhardtii (Chlamydomonas smithii).